The primary structure comprises 485 residues: Sodium-coupled neutral amino acid symporter 1 (485 aa).

The Cytoplasmic portion of the chain corresponds to 1 to 74 (MMHFKSGLEL…EYIPGTTSLG (74 aa)). Phosphoserine is present on serine 6. Threonine 11 carries the post-translational modification Phosphothreonine. Serine 25, serine 28, serine 49, and serine 52 each carry phosphoserine. A Phosphothreonine modification is found at threonine 54. Serine 56 is modified (phosphoserine). The helical transmembrane segment at 75-97 (MSVFNLSNAIMGSGILGLAFALA) threads the bilayer. At 98–112 (NTGILLFLILLTSVT) the chain is on the extracellular side. Residues 113–133 (LLSIYSINLLLICSKETGCMV) traverse the membrane as a helical segment. Residues 134 to 148 (YEKLGEQVFGTTGKL) lie on the Cytoplasmic side of the membrane. A helical transmembrane segment spans residues 149–169 (VIFGATSLQNTGAMLSYLFIV). The Extracellular segment spans residues 170-188 (KNELPSAIKSLMGEEETFS). Residues 189–211 (AWYVDGRVLVVMVTFGIILPLCL) form a helical membrane-spanning segment. At 212–216 (LKNLG) the chain is on the cytoplasmic side. The helical transmembrane segment at 217–237 (YLGYTSGFSLSCMVFFLIVVI) threads the bilayer. Over 238-273 (YKKFQIPCMNGEQNSTVSANVTDACTPKYVTFNSKT) the chain is Extracellular. Cysteines 245 and 262 form a disulfide. Residues asparagine 251 and asparagine 257 are each glycosylated (N-linked (GlcNAc...) asparagine). The chain crosses the membrane as a helical span at residues 274-294 (VYALPTIAFAFVCHPSVLPIY). The Cytoplasmic portion of the chain corresponds to 295-310 (SELKDRSQKKMQMVSN). The chain crosses the membrane as a helical span at residues 311–331 (ISFFAMFVMYFLTAIFGYLTF). The Extracellular portion of the chain corresponds to 332-348 (YEKVQSDLLHKYQSTGD). The chain crosses the membrane as a helical span at residues 349-369 (ILILTVRLAVIVAVILTVPVL). The Cytoplasmic segment spans residues 370 to 391 (FFTVRSSLFELAKKTKFHLCRH). The chain crosses the membrane as a helical span at residues 392 to 412 (VLVTIILLVIINLLVIFIPSM). The Extracellular portion of the chain corresponds to 413 to 414 (KD). The chain crosses the membrane as a helical span at residues 415–435 (IFGVVGVTSANMLIFILPSSL). At 436–450 (YLKITNQDGDKNTQR) the chain is on the cytoplasmic side. Residues 451–471 (IWAALFLALGVLFSLISIPLV) form a helical membrane-spanning segment. The Extracellular segment spans residues 472–485 (IYDWACSSSNGEGH).

It belongs to the amino acid/polyamine transporter 2 family. N-glycosylation plays an important role in the L-glutamine transport. In terms of tissue distribution, specifically expressed in brain with the highest levels in cerebellum and thalamus (at protein level). Expressed in glutamatergic, GABAergic and a subset of dopaminergic neurons of the substantia nigra and cholinergic motoneurons (at protein level). Also expressed by ependymal cells lining the ventricle (at protein level). Expression is also detected in spinal cord, heart, colon and placenta.

Its subcellular location is the cell membrane. It catalyses the reaction L-glutamine(in) + Na(+)(in) = L-glutamine(out) + Na(+)(out). The enzyme catalyses L-alanine(in) + Na(+)(in) = L-alanine(out) + Na(+)(out). The catalysed reaction is L-asparagine(in) + Na(+)(in) = L-asparagine(out) + Na(+)(out). It carries out the reaction L-histidine(in) + Na(+)(in) = L-histidine(out) + Na(+)(out). It catalyses the reaction L-serine(in) + Na(+)(in) = L-serine(out) + Na(+)(out). The enzyme catalyses L-cysteine(in) + Na(+)(in) = L-cysteine(out) + Na(+)(out). The catalysed reaction is L-methionine(in) + Na(+)(in) = L-methionine(out) + Na(+)(out). It carries out the reaction glycine(in) + Na(+)(in) = glycine(out) + Na(+)(out). It catalyses the reaction L-threonine(in) + Na(+)(in) = L-threonine(out) + Na(+)(out). The enzyme catalyses L-proline(in) + Na(+)(in) = L-proline(out) + Na(+)(out). Its activity is regulated as follows. Inhibited by alpha-(methylamino)isobutyric acid (MeAIB). Inhibited by lithium, potassium, choline ions, N-methylglucamine. The pH dependence has an allosteric effect on the transport. In terms of biological role, symporter that cotransports short-chain neutral amino acids and sodium ions from the extraccellular to the intracellular side of the cell membrane. The transport is elctrogenic, pH dependent and driven by the Na(+) electrochemical gradient. Participates in the astroglia-derived glutamine transport into GABAergic interneurons for neurotransmitter GABA de novo synthesis. May also contributes to amino acid transport in placental trophoblast. Regulates synaptic plasticity. This Rattus norvegicus (Rat) protein is Sodium-coupled neutral amino acid symporter 1.